Consider the following 148-residue polypeptide: Large ribosomal subunit protein bL9 (148 aa).

Belongs to the bacterial ribosomal protein bL9 family.

Its function is as follows. Binds to the 23S rRNA. This is Large ribosomal subunit protein bL9 from Methylococcus capsulatus (strain ATCC 33009 / NCIMB 11132 / Bath).